The chain runs to 474 residues: Probable fucosyltransferase 9 (474 aa).

Residues 1–21 (MIKLTIAIATCLVLCLVLLLP) form a helical; Signal-anchor for type II membrane protein membrane-spanning segment. At 22–474 (SSNISYRHKY…LKLVDVSDEL (453 aa)) the chain is on the lumenal side. 3 N-linked (GlcNAc...) asparagine glycosylation sites follow: Asn24, Asn39, and Asn208.

Belongs to the glycosyltransferase 37 family. As to expression, expressed in leaves and stems.

Its subcellular location is the golgi apparatus. The protein localises to the golgi stack membrane. The protein operates within protein modification; protein glycosylation. Functionally, may be involved in cell wall biosynthesis. May act as a fucosyltransferase. The sequence is that of Probable fucosyltransferase 9 (FUT9) from Arabidopsis thaliana (Mouse-ear cress).